The sequence spans 1681 residues: MLTSPEPKGLVPFTTESLELIENHIAKKCNEDPEEEEGLKPSRNLEAGKRLPIPYGTLPRGTVSEPLEDVDPYYYVKRNTFMVLNRSRVIFRFNAVSIFCTLSPLNSLRRAAIKALVHPLFRLLILISVLTDSILMCMSNLPEWILAIENTLLGIYAFEILVKVIARGIWAGSFSFLGDLWNWLDFSVTLFELITRFSPLSSFLMLKTIRTFRILKIIPLNHGLQSIVMTLAQCLKKLFGAIALALFFLAVFSLLGMGLFMGNLKHKCLRWPEENENETLHNRTGSLNYSPERINFYYMEGAKYALLCGNRTDAGQCPEGYVCVKEGTNPDNGFTSFDNFGWSLLAMFRLMTQDYPELLYHQILYASGKVYMIFFVMISFWFAFYLTSLFLGILTMTYEKEKQRACEESGGLDPKCQQTVKELDEENDAAEMETTQIEMKKRSPTSINTTLDILEDTTLGHREEPETSRKKCPICWHKFIKTCFIWKCSPCWVKLNEFADRVITHPLADLFLVICIVLNICFLALEHFPMSEELRSLLHVGNLVFIGIYTIEMILKIIAMHPYGYFQISWNIFDSILVVLELTEILLADVEGLAVLITVPLIFIKLGKYGPPFKSLMRILGSSLMALKDLVLLLCIFVYFSAVFGMKLFGRSYKDCVCHIKEDCQPQRWHMSDFLHAYMTVFRILCGEWIETLWECMEVAGQAWCIPFYMMVILIGNLLILYLFVTLVSSFSYYDATSEVNKEAKNLQLAMARIKSGINSMLLKLMCTERSVPTEATDQICDPSVKENISGHTLSELSNTQTFLRYKDQSSSTEKTPVTESESQSLIASPSASETVPIASGESDIENLDNKETRSKSGNGGSKEKMKQSSSSECSTVDIAISEEEEMVYEHEKSKLHKNGYERKSSTGQISRESRNGKIWKNIRKTCCKIVENSWFECFIGLVTLLCTGTLALEDIYIDQRKTTKILLEYADMIFAYIFILEMLLKWVAYGFKAFFSNNWYKLDFMVVIVFCLSLIGKTREDLNPLTSIKFLRALRVLSQFERMKVVLRALIKTTLPTVSVFLVCLMIWLLFSVIGVQLFAGKFYECIDPTKGERFPVFEVMNKSQCEKLLFNESMPWENAKLNFDNVGNGFLSLLQVATFNGWISIMNSAIDSVGVNMQPSFEYNLYMYSYFIIFVIFGLFLPLCMLIGVIIRNFNKQKIKQGGSNIFITVKQKKQYRALKKLLYADVQKPTPRPRNKFQGFLFDLVTHRVFNVIIILLICFQATTIMIQKDEQSPQMETAIFWMNSIFVMLFTLECILKLTAFRCHYFTSAWNVHDFMVVIFSITGLLLPLTIGQYFVPPSLVQLILLSRVIHILRPGKGPKVFHDLMLPLILALPALLNISLLIFLVMFIYAIFGMYNFAYVKKEAGINDVSNFETFGSSMLCLFQVTTFSGWDGMLDAIFNSQWSDCDPDKINPGTQVKGDCGSPSVGISYFVSYILISWLIIVNMYIVLIMEFLSIPSQKKSRTLSEDDFRRFFRVWNRFDPDRTQYIDSSKLSDFAAALDPPLFMAKPNKGQLVAMDLPMAAGDRIHCLDILLAFTKRVMGKDERVEKILSEIESGFMLANPFKITYEPITTTLKRKQEAVSATIIQRAYKSYRLRQNDKNVSDTPAIDDRRDDLTSKGAHSGKIEEKASIQTQI.

At 1–118 (MLTSPEPKGL…RRAAIKALVH (118 aa)) the chain is on the cytoplasmic side. Residues 101–402 (TLSPLNSLRR…ILTMTYEKEK (302 aa)) form an I repeat. A helical transmembrane segment spans residues 119–138 (PLFRLLILISVLTDSILMCM). Over 139 to 142 (SNLP) the chain is Extracellular. A helical transmembrane segment spans residues 143-168 (EWILAIENTLLGIYAFEILVKVIARG). The Cytoplasmic portion of the chain corresponds to 169 to 179 (IWAGSFSFLGD). The helical transmembrane segment at 180–197 (LWNWLDFSVTLFELITRF) threads the bilayer. Over 198–201 (SPLS) the chain is Extracellular. The helical transmembrane segment at 202–220 (SFLMLKTIRTFRILKIIPL) threads the bilayer. Topologically, residues 221–238 (NHGLQSIVMTLAQCLKKL) are cytoplasmic. Residues 239-260 (FGAIALALFFLAVFSLLGMGLF) traverse the membrane as a helical segment. Residues 261-339 (MGNLKHKCLR…PDNGFTSFDN (79 aa)) are Extracellular-facing. C268 and C308 are disulfide-bonded. Residues N277, N282, N288, and N310 are each glycosylated (N-linked (GlcNAc...) asparagine). The pore-forming intramembrane region spans 340–367 (FGWSLLAMFRLMTQDYPELLYHQILYAS). A topological domain (extracellular) is located at residue G368. Residues 369–408 (KVYMIFFVMISFWFAFYLTSLFLGILTMTYEKEKQRACEE) form a helical membrane-spanning segment. At 409–506 (SGGLDPKCQQ…EFADRVITHP (98 aa)) the chain is on the cytoplasmic side. Residues 488–757 (CSPCWVKLNE…QLAMARIKSG (270 aa)) form an II repeat. A helical transmembrane segment spans residues 507–522 (LADLFLVICIVLNICF). Residues 523–531 (LALEHFPMS) are Extracellular-facing. A helical membrane pass occupies residues 532–560 (EELRSLLHVGNLVFIGIYTIEMILKIIAM). Residues 561–569 (HPYGYFQIS) lie on the Cytoplasmic side of the membrane. A helical transmembrane segment spans residues 570–587 (WNIFDSILVVLELTEILL). The Extracellular portion of the chain corresponds to 588–593 (ADVEGL). Residues 594 to 609 (AVLITVPLIFIKLGKY) traverse the membrane as a helical segment. Over 610–626 (GPPFKSLMRILGSSLMA) the chain is Cytoplasmic. The helical transmembrane segment at 627–655 (LKDLVLLLCIFVYFSAVFGMKLFGRSYKD) threads the bilayer. Topologically, residues 656–673 (CVCHIKEDCQPQRWHMSD) are extracellular. Intrachain disulfides connect C658-C664 and C696-C705. Positions 674-700 (FLHAYMTVFRILCGEWIETLWECMEVA) form an intramembrane region, pore-forming. Residue G701 is a topological domain, extracellular. A helical transmembrane segment spans residues 702-732 (QAWCIPFYMMVILIGNLLILYLFVTLVSSFS). At 733 to 934 (YYDATSEVNK…KTCCKIVENS (202 aa)) the chain is on the cytoplasmic side. Residues 806 to 834 (YKDQSSSTEKTPVTESESQSLIASPSASE) show a composition bias toward polar residues. A disordered region spans residues 806-875 (YKDQSSSTEK…MKQSSSSECS (70 aa)). S843 carries the post-translational modification Phosphoserine. An III repeat occupies 916-1224 (NGKIWKNIRK…KKQYRALKKL (309 aa)). The helical transmembrane segment at 935–953 (WFECFIGLVTLLCTGTLAL) threads the bilayer. Over 954–961 (EDIYIDQR) the chain is Extracellular. The chain crosses the membrane as a helical span at residues 962–990 (KTTKILLEYADMIFAYIFILEMLLKWVAY). The Cytoplasmic portion of the chain corresponds to 991 to 998 (GFKAFFSN). A helical transmembrane segment spans residues 999-1020 (NWYKLDFMVVIVFCLSLIGKTR). Position 1021 (E1021) is a topological domain, extracellular. The chain crosses the membrane as a helical span at residues 1022 to 1040 (DLNPLTSIKFLRALRVLSQ). At 1041 to 1055 (FERMKVVLRALIKTT) the chain is on the cytoplasmic side. Residues 1056–1080 (LPTVSVFLVCLMIWLLFSVIGVQLF) form a helical membrane-spanning segment. At 1081–1127 (AGKFYECIDPTKGERFPVFEVMNKSQCEKLLFNESMPWENAKLNFDN) the chain is on the extracellular side. C1087 and C1107 are disulfide-bonded. N-linked (GlcNAc...) asparagine glycosylation is found at N1103 and N1113. An intramembrane region (pore-forming) is located at residues 1128–1154 (VGNGFLSLLQVATFNGWISIMNSAIDS). Over 1155–1167 (VGVNMQPSFEYNL) the chain is Extracellular. The chain crosses the membrane as a helical span at residues 1168–1202 (YMYSYFIIFVIFGLFLPLCMLIGVIIRNFNKQKIK). Residues 1203–1250 (QGGSNIFITVKQKKQYRALKKLLYADVQKPTPRPRNKFQGFLFDLVTH) lie on the Cytoplasmic side of the membrane. An IV repeat occupies 1233–1531 (TPRPRNKFQG…WNRFDPDRTQ (299 aa)). A helical membrane pass occupies residues 1251 to 1272 (RVFNVIIILLICFQATTIMIQK). Residues 1273 to 1276 (DEQS) lie on the Extracellular side of the membrane. A helical membrane pass occupies residues 1277–1305 (PQMETAIFWMNSIFVMLFTLECILKLTAF). Residues 1306-1312 (RCHYFTS) lie on the Cytoplasmic side of the membrane. A helical membrane pass occupies residues 1313 to 1338 (AWNVHDFMVVIFSITGLLLPLTIGQY). At 1339–1341 (FVP) the chain is on the extracellular side. A helical transmembrane segment spans residues 1342–1362 (PSLVQLILLSRVIHILRPGKG). Topologically, residues 1363 to 1377 (PKVFHDLMLPLILAL) are cytoplasmic. A helical transmembrane segment spans residues 1378 to 1402 (PALLNISLLIFLVMFIYAIFGMYNF). Residues 1403–1420 (AYVKKEAGINDVSNFETF) lie on the Extracellular side of the membrane. An intramembrane region (pore-forming) is located at residues 1421–1444 (GSSMLCLFQVTTFSGWDGMLDAIF). The Extracellular segment spans residues 1445 to 1468 (NSQWSDCDPDKINPGTQVKGDCGS). A disulfide bridge links C1451 with C1466. Residues 1469–1504 (PSVGISYFVSYILISWLIIVNMYIVLIMEFLSIPSQ) form a helical membrane-spanning segment. Residues 1505-1681 (KKSRTLSEDD…EEKASIQTQI (177 aa)) lie on the Cytoplasmic side of the membrane. Positions 1647–1662 (NVSDTPAIDDRRDDLT) are enriched in basic and acidic residues. Positions 1647–1681 (NVSDTPAIDDRRDDLTSKGAHSGKIEEKASIQTQI) are disordered.

Belongs to the sodium channel (TC 1.A.1.10) family. SCN7A subfamily. The sodium channel formed by SCN7A is probably a heterooligomeric complex consisting of the ion conducting pore forming alpha subunit SCN7A and regulatory beta subunits such as SCN3B. Interacts with ATP1A1; activates ATP1A1 and thereby indirectly signals to nearby neurons to regulate sodium homeostasis. In terms of tissue distribution, not tissue specific but widely expressed. Expressed in regions of the central nervous system that control body fluid ionic balance.

It is found in the cell membrane. It carries out the reaction Na(+)(in) = Na(+)(out). Its function is as follows. Sodium leak channel functioning as an osmosensor regulating sodium ion levels in various tissues and organs. While most sodium channels are voltage-gated, SCN7A is not and lets sodium flow through membrane along its concentration gradient. In glial cells of the central nervous system, senses body-fluid sodium levels and controls salt intake behavior as well as voluntary water intake through activation of nearby neurons to maintain appropriate sodium levels in the body. By mediating sodium influx into keratinocytes, also plays a role in skin barrier homeostasis. This is Sodium channel protein type 7 subunit alpha from Mus musculus (Mouse).